Consider the following 780-residue polypeptide: Ino eighty subunit 1 (780 aa).

2 disordered regions span residues 1 to 25 and 563 to 780; these read MADV…QQIH and ANGP…PGWN. The span at 563–584 shows a compositional bias: basic and acidic residues; that stretch reads ANGPRRDRKKEREERQKAREEA. Residues 600 to 613 show a composition bias toward basic residues; it reads SRARAQRNAKRKLA. Low complexity predominate over residues 614 to 635; sequence RAAAAASSTPSASTPKTAAARS. 2 stretches are compositionally biased toward acidic residues: residues 676-686 and 723-751; these read LEGEESLDDID and DADD…EGDD.

As to quaternary structure, component of the chromatin-remodeling INO80 complex.

It localises to the nucleus. Functionally, probably involved in transcription regulation via its interaction with the INO80 complex, a chromatin-remodeling complex. The polypeptide is Ino eighty subunit 1 (Emericella nidulans (strain FGSC A4 / ATCC 38163 / CBS 112.46 / NRRL 194 / M139) (Aspergillus nidulans)).